A 210-amino-acid polypeptide reads, in one-letter code: Ribosomal RNA large subunit methyltransferase E (210 aa).

S-adenosyl-L-methionine-binding residues include glycine 67, tryptophan 69, aspartate 87, aspartate 103, and aspartate 128. Lysine 168 (proton acceptor) is an active-site residue.

Belongs to the class I-like SAM-binding methyltransferase superfamily. RNA methyltransferase RlmE family.

The protein localises to the cytoplasm. The catalysed reaction is uridine(2552) in 23S rRNA + S-adenosyl-L-methionine = 2'-O-methyluridine(2552) in 23S rRNA + S-adenosyl-L-homocysteine + H(+). Its function is as follows. Specifically methylates the uridine in position 2552 of 23S rRNA at the 2'-O position of the ribose in the fully assembled 50S ribosomal subunit. The protein is Ribosomal RNA large subunit methyltransferase E of Psychrobacter arcticus (strain DSM 17307 / VKM B-2377 / 273-4).